The following is an 810-amino-acid chain: Fibroblast growth factor receptor 1-A (810 aa).

Residues 1-26 form the signal peptide; sequence MKMMMIMKTTLLLISVLLTQALQSQG. Topologically, residues 27 to 363 are extracellular; it reads RPAIQDEAPA…TQLPNQTYLE (337 aa). 3 Ig-like C2-type domains span residues 28 to 115, 147 to 235, and 244 to 346; these read PAIQ…FNIS, PDKM…YQLD, and PILQ…AWLT. The cysteines at positions 53 and 99 are disulfide-linked. Asn107, Asn113, Asn216, Asn229, Asn253, Asn285, Asn306, Asn319, and Asn358 each carry an N-linked (GlcNAc...) asparagine glycan. Cys167 and Cys219 are oxidised to a cystine. Cys266 and Cys330 are joined by a disulfide. A helical transmembrane segment spans residues 364–384; sequence VLIYCVGFFLICVMVGTAVLA. At 385 to 810 the chain is on the cytoplasmic side; the sequence is KMHSSAKKSD…PNRGVAFKKR (426 aa). A Phosphotyrosine; by autocatalysis modification is found at Tyr450. One can recognise a Protein kinase domain in the interval 465–754; it reads LVLGKPLGEG…LSMTSNQEYL (290 aa). ATP is bound by residues 471–477, Lys501, 549–551, and Asn555; these read LGEGCFG and EFA. A phosphotyrosine; by autocatalysis mark is found at Tyr570 and Tyr572. Asp610 functions as the Proton acceptor in the catalytic mechanism. ATP contacts are provided by Arg614 and Asp628. Tyr640, Tyr641, Tyr717, and Tyr753 each carry phosphotyrosine; by autocatalysis. A disordered region spans residues 787–810; it reads AGADEPCLPKFPPHPNRGVAFKKR.

The protein belongs to the protein kinase superfamily. Tyr protein kinase family. Fibroblast growth factor receptor subfamily. Monomer. Homodimer after ligand binding. Interacts with cnpy1. Autophosphorylated. Binding of FGF family members together with heparan sulfate proteoglycan or heparin promotes receptor dimerization and autophosphorylation on tyrosine residues. Autophosphorylation occurs in trans between the two FGFR molecules present in the dimer and proceeds in a highly ordered manner. Phosphotyrosine residues provide docking sites for interacting proteins and so are crucial for FGFR1 function and its regulation. In terms of processing, ubiquitinated. FGFR1 is rapidly ubiquitinated after autophosphorylation, leading to internalization and degradation. Post-translationally, N-glycosylated in the endoplasmic reticulum. The N-glycan chains undergo further maturation to an Endo H-resistant form in the Golgi apparatus. As to expression, initially expressed in adaxial mesoderm with transcripts distinctly localized to the anterior portion of each half-somite. Hereupon, also strongly expressed in the otic vesicles, branchial arches and the brain, especially at the midbrain-hindbrain boundary (MHB).

Its subcellular location is the cell membrane. It is found in the nucleus. It localises to the cytoplasm. The protein resides in the cytosol. The protein localises to the cytoplasmic vesicle. The catalysed reaction is L-tyrosyl-[protein] + ATP = O-phospho-L-tyrosyl-[protein] + ADP + H(+). Its activity is regulated as follows. Present in an inactive conformation in the absence of bound ligand. Ligand binding leads to dimerization and activation by sequential autophosphorylation on tyrosine residues. In terms of biological role, tyrosine-protein kinase that acts as a cell-surface receptor for fibroblast growth factors and plays an essential role in the regulation of embryonic development, cell proliferation, differentiation and migration. Required for normal mesoderm patterning and normal skeletogenesis. Phosphorylates PLCG1, FRS2, GAB1 and SHB. Ligand binding leads to the activation of several signaling cascades. Activation of PLCG1 leads to the production of the cellular signaling molecules diacylglycerol and inositol-1,4,5-trisphosphate. Phosphorylation of FRS2 triggers recruitment of GRB2, GAB1, PIK3R1 and SOS1, and mediates activation of RAS, MAPK1/ERK2, MAPK3/ERK1 and the MAP kinase signaling pathway, as well as of the AKT1 signaling pathway. Promotes phosphorylation of SHC1, STAT1 and PTPN11/SHP2. In the nucleus, enhances RPS6KA1 and CREB1 activity and contributes to the regulation of transcription. FGFR1 signaling is down-regulated by ubiquitination, internalization and degradation. The chain is Fibroblast growth factor receptor 1-A (fgfr1a) from Danio rerio (Zebrafish).